The primary structure comprises 193 residues: Holliday junction branch migration complex subunit RuvA (193 aa).

The tract at residues 1 to 63 is domain I; that stretch reads MYAYLKGKIM…EDAQLLYGFK (63 aa). Residues 64–141 are domain II; it reads DEEEKAMFNA…TITDESELFK (78 aa). The tract at residues 141–142 is flexible linker; sequence KE. Residues 143-193 are domain III; sequence VNDTLLNEALLAFEALGYSKREITKIEKELKKKQFSTVDEYVKQGLQMFVS.

This sequence belongs to the RuvA family. In terms of assembly, homotetramer. Forms an RuvA(8)-RuvB(12)-Holliday junction (HJ) complex. HJ DNA is sandwiched between 2 RuvA tetramers; dsDNA enters through RuvA and exits via RuvB. An RuvB hexamer assembles on each DNA strand where it exits the tetramer. Each RuvB hexamer is contacted by two RuvA subunits (via domain III) on 2 adjacent RuvB subunits; this complex drives branch migration. In the full resolvosome a probable DNA-RuvA(4)-RuvB(12)-RuvC(2) complex forms which resolves the HJ.

The protein localises to the cytoplasm. Functionally, the RuvA-RuvB-RuvC complex processes Holliday junction (HJ) DNA during genetic recombination and DNA repair, while the RuvA-RuvB complex plays an important role in the rescue of blocked DNA replication forks via replication fork reversal (RFR). RuvA specifically binds to HJ cruciform DNA, conferring on it an open structure. The RuvB hexamer acts as an ATP-dependent pump, pulling dsDNA into and through the RuvAB complex. HJ branch migration allows RuvC to scan DNA until it finds its consensus sequence, where it cleaves and resolves the cruciform DNA. The chain is Holliday junction branch migration complex subunit RuvA from Macrococcus caseolyticus (strain JCSC5402) (Macrococcoides caseolyticum).